A 541-amino-acid chain; its full sequence is Chaperonin GroEL 1 (541 aa).

Residues 29–32, 86–90, Gly-413, 477–479, and Asp-493 contribute to the ATP site; these read TLGP, DGTTT, and NAA.

It belongs to the chaperonin (HSP60) family. As to quaternary structure, forms a cylinder of 14 subunits composed of two heptameric rings stacked back-to-back. Interacts with the co-chaperonin GroES.

It localises to the cytoplasm. The enzyme catalyses ATP + H2O + a folded polypeptide = ADP + phosphate + an unfolded polypeptide.. Together with its co-chaperonin GroES, plays an essential role in assisting protein folding. The GroEL-GroES system forms a nano-cage that allows encapsulation of the non-native substrate proteins and provides a physical environment optimized to promote and accelerate protein folding. The polypeptide is Chaperonin GroEL 1 (Nocardioides sp. (strain ATCC BAA-499 / JS614)).